A 361-amino-acid chain; its full sequence is Aurora kinase B-A (361 aa).

Positions 93 to 343 constitute a Protein kinase domain; that stretch reads FDIGRPLGKG…LKGVMEHPWV (251 aa). Residues 99–107 and Lys-122 each bind ATP; that span reads LGKGKFGNV. Catalysis depends on Asp-216, which acts as the Proton acceptor.

Belongs to the protein kinase superfamily. Ser/Thr protein kinase family. Aurora subfamily. Component of the CPC at least composed of survivin/birc5, incenp, cdca8/borealin and/or cdca9/dasra-A, and aurkb/aurora-B. Interacts directly (via N-terminus and kinase domain) with incenp (via C terminus), and may weakly interact (via N-terminus) with birc5.1 to stabilize the complex. Interacts with mtus1. The cofactor is Mg(2+). Phosphorylated, stimulates kinase activity.

It localises to the nucleus. The protein resides in the chromosome. It carries out the reaction L-seryl-[protein] + ATP = O-phospho-L-seryl-[protein] + ADP + H(+). The enzyme catalyses L-threonyl-[protein] + ATP = O-phospho-L-threonyl-[protein] + ADP + H(+). Kinase activity is stimulated by both birc5/survivin-binding and cell-cycle specific phosphorylation. Its function is as follows. Serine/threonine-protein kinase component of the chromosomal passenger complex (CPC), a complex that acts as a key regulator of mitosis. The CPC complex has essential functions at the centromere in ensuring correct chromosome alignment and segregation and is required for chromatin-induced microtubule stabilization and spindle assembly. Involved in the bipolar attachment of spindle microtubules to kinetochores and is a key regulator for the onset of cytokinesis during mitosis. Required for central/midzone spindle assembly and cleavage furrow formation. Key component of the cytokinesis checkpoint, a process required to delay abscission to prevent both premature resolution of intercellular chromosome bridges and accumulation of DNA damage. Phosphorylates 'Ser-10' of histone H3 during mitosis. In Xenopus laevis (African clawed frog), this protein is Aurora kinase B-A (aurkb-a).